Here is a 601-residue protein sequence, read N- to C-terminus: Cdc42-interacting protein 4 (601 aa).

Residues 1-117 form a required for podosome formation and interaction with AKAP9 and microtubules region; sequence MDWGTELWDQ…EMKQERKMHF (117 aa). A required for translocation to the plasma membrane in response to insulin region spans residues 1 to 117; it reads MDWGTELWDQ…EMKQERKMHF (117 aa). One can recognise an F-BAR domain in the interval 1–264; that stretch reads MDWGTELWDQ…AANAVDPKND (264 aa). Positions 67-259 form a coiled coil; it reads FSQQQSFVQI…EGMKVAANAV (193 aa). Disordered stretches follow at residues 280–358, 390–420, and 479–543; these read GDVE…GRDP, DFSHLPPEQQRKRLQQQLEERSRELQKEVDQ, and RGDS…SPIG. The span at 289 to 302 shows a compositional bias: polar residues; it reads QPMNRAPSDSSLGT. An interaction with CDC42 region spans residues 293–537; sequence RAPSDSSLGT…TEFDEDFEEE (245 aa). An interaction with PDE6G region spans residues 293-601; sequence RAPSDSSLGT…PTSYLRVTLN (309 aa). A phosphoserine mark is found at Ser-296, Ser-298, and Ser-299. Over residues 314–329 the composition is skewed to basic residues; it reads GRSRTKRWPFGKKNKP. Ser-335 carries the phosphoserine modification. The span at 336 to 346 shows a compositional bias: low complexity; that stretch reads PLGGPVPSALP. Ser-351 carries the phosphoserine modification. Residues 388 to 481 are a coiled coil; it reads TEDFSHLPPE…ESRVLSNRGD (94 aa). The REM-1 domain occupies 393 to 470; sequence HLPPEQQRKR…VQKYEAWLAE (78 aa). Over residues 407-420 the composition is skewed to basic and acidic residues; that stretch reads LEERSRELQKEVDQ. Positions 471–601 are required for interaction with FASLG and localization to lysosomes; that stretch reads AESRVLSNRG…PTSYLRVTLN (131 aa). Ser-482 bears the Phosphoserine mark. Positions 487 to 541 are interaction with DNM2 and WASL; that stretch reads ARPPDPPASAPPDSSSNSASQDTKESSEEPPSEESQDTPIYTEFDEDFEEEPTSP. Over residues 497-506 the composition is skewed to low complexity; it reads PPDSSSNSAS. A compositionally biased stretch (acidic residues) spans 529-538; the sequence is EFDEDFEEEP. The segment at 529–601 is interaction with DNM1 and WASL; that stretch reads EFDEDFEEEP…PTSYLRVTLN (73 aa). The required for podosome formation stretch occupies residues 538-601; it reads PTSPIGHCVA…PTSYLRVTLN (64 aa). Positions 540 to 601 constitute an SH3 domain; that stretch reads SPIGHCVAIY…PTSYLRVTLN (62 aa). The interaction with WAS stretch occupies residues 544–601; that stretch reads HCVAIYHFEGSSEGTISMAEGEDLSLMEEDKGDGWTRVRRKEGGEGYVPTSYLRVTLN. Residues 546–601 are interaction with ARHGAP17, DAAM1, DIAPH1 and DIAPH2; sequence VAIYHFEGSSEGTISMAEGEDLSLMEEDKGDGWTRVRRKEGGEGYVPTSYLRVTLN.

The protein belongs to the FNBP1 family. As to quaternary structure, interacts specifically with GTP-bound RHOQ. Interacts with DNM2 and PDE6G. Homodimerizes, the dimers can polymerize end-to-end to form filamentous structures. Interacts specifically with GTP-bound CDC42. Interacts with AKAP9, ARHGAP17, DAAM1, DIAPH1, DIAPH2, DNM1, FASLG/FASL, GAPVD1, LYN, microtubules, SRC, WAS/WASP and WASL/N-WASP. Interacts with the ligand binding domain of the thyroid receptor (TR) in the presence of thyroid hormone. May interact with CTNNB1 and HD/HTT. Post-translationally, tyrosine phosphorylated. Also phosphorylated by PKA. In terms of tissue distribution, expressed in brain, colon, heart, kidney, liver, lung, megakaryocyte, ovary, pancreas, peripheral blood lymphocytes, placenta, prostate, skeletal muscle, small intestine, spleen, testis, thymus and trachea.

It is found in the cytoplasm. The protein resides in the cytoskeleton. It localises to the cell cortex. The protein localises to the lysosome. Its subcellular location is the golgi apparatus. It is found in the cell membrane. The protein resides in the cell projection. It localises to the phagocytic cup. The protein localises to the perinuclear region. In terms of biological role, required for translocation of GLUT4 to the plasma membrane in response to insulin signaling. Required to coordinate membrane tubulation with reorganization of the actin cytoskeleton during endocytosis. Binds to lipids such as phosphatidylinositol 4,5-bisphosphate and phosphatidylserine and promotes membrane invagination and the formation of tubules. Also promotes CDC42-induced actin polymerization by recruiting WASL/N-WASP which in turn activates the Arp2/3 complex. Actin polymerization may promote the fission of membrane tubules to form endocytic vesicles. Required for the formation of podosomes, actin-rich adhesion structures specific to monocyte-derived cells. May be required for the lysosomal retention of FASLG/FASL. In Homo sapiens (Human), this protein is Cdc42-interacting protein 4 (TRIP10).